Here is a 291-residue protein sequence, read N- to C-terminus: ATP synthase gamma chain 2 (291 aa).

The segment at 187–208 (LLPHPDKDESQDSKPNDATSRW) is disordered. Basic and acidic residues predominate over residues 190–201 (HPDKDESQDSKP).

This sequence belongs to the ATPase gamma chain family. In terms of assembly, F-type ATPases have 2 components, CF(1) - the catalytic core - and CF(0) - the membrane proton channel. CF(1) has five subunits: alpha(3), beta(3), gamma(1), delta(1), epsilon(1). CF(0) has three main subunits: a, b and c.

Its subcellular location is the cell inner membrane. In terms of biological role, produces ATP from ADP in the presence of a proton gradient across the membrane. The gamma chain is believed to be important in regulating ATPase activity and the flow of protons through the CF(0) complex. This Photobacterium profundum (strain SS9) protein is ATP synthase gamma chain 2.